The chain runs to 121 residues: Small ribosomal subunit protein uS13 (121 aa).

A disordered region spans residues Pro96–Lys121. Residues Ala106–Lys121 show a composition bias toward basic residues.

This sequence belongs to the universal ribosomal protein uS13 family. In terms of assembly, part of the 30S ribosomal subunit. Forms a loose heterodimer with protein S19. Forms two bridges to the 50S subunit in the 70S ribosome.

Located at the top of the head of the 30S subunit, it contacts several helices of the 16S rRNA. In the 70S ribosome it contacts the 23S rRNA (bridge B1a) and protein L5 of the 50S subunit (bridge B1b), connecting the 2 subunits; these bridges are implicated in subunit movement. Contacts the tRNAs in the A and P-sites. This is Small ribosomal subunit protein uS13 from Streptococcus gordonii (strain Challis / ATCC 35105 / BCRC 15272 / CH1 / DL1 / V288).